We begin with the raw amino-acid sequence, 136 residues long: Large ribosomal subunit protein uL16c (136 aa).

This sequence belongs to the universal ribosomal protein uL16 family. In terms of assembly, part of the 50S ribosomal subunit.

It is found in the plastid. Its subcellular location is the chloroplast. The chain is Large ribosomal subunit protein uL16c from Chlamydomonas reinhardtii (Chlamydomonas smithii).